We begin with the raw amino-acid sequence, 449 residues long: Methionine aminopeptidase 2 (449 aa).

The segment at 1–91 (MAAQAAPELA…PRIPLTTLFP (91 aa)) is disordered. Residues 34-50 (EEAENEGDSDDDRDDEQ) show a composition bias toward acidic residues. Positions 61–75 (KKKKKKRPKKKKKTA) are enriched in basic residues. Position 199 (H199) interacts with substrate. A divalent metal cation-binding residues include D219, D230, and H299. H307 is a binding site for substrate. The a divalent metal cation site is built by E335 and E430.

Belongs to the peptidase M24A family. Methionine aminopeptidase eukaryotic type 2 subfamily. Co(2+) serves as cofactor. The cofactor is Zn(2+). It depends on Mn(2+) as a cofactor. Fe(2+) is required as a cofactor.

The protein localises to the cytoplasm. The catalysed reaction is Release of N-terminal amino acids, preferentially methionine, from peptides and arylamides.. Its function is as follows. Cotranslationally removes the N-terminal methionine from nascent proteins. The N-terminal methionine is often cleaved when the second residue in the primary sequence is small and uncharged (Met-Ala-, Cys, Gly, Pro, Ser, Thr, or Val). The polypeptide is Methionine aminopeptidase 2 (Arthroderma benhamiae (strain ATCC MYA-4681 / CBS 112371) (Trichophyton mentagrophytes)).